The following is a 554-amino-acid chain: Solute carrier family 22 member 1 (554 aa).

At 1–21 (MPTVDDVLEQVGEFGWFQKRT) the chain is on the cytoplasmic side. The helical transmembrane segment at 22–42 (FLFLCLISAILAPIYLGIVFL) threads the bilayer. Residues 43 to 149 (GFTPDHRCRS…LVCADAWKVD (107 aa)) lie on the Extracellular side of the membrane. A glycan (N-linked (GlcNAc...) asparagine) is linked at Asn-71. A helical transmembrane segment spans residues 150-170 (LFQSCVNLGFFLGSLGVGYIA). The Cytoplasmic segment spans residues 171-176 (DRFGRK). Residues 177-197 (LCLLLTTLINAVSGVLTAVAP) traverse the membrane as a helical segment. Over 198 to 206 (DYTSMLLFR) the chain is Extracellular. The helical transmembrane segment at 207–229 (LLQGLVSKGSWMSGYTLITEFVG) threads the bilayer. At 230 to 237 (SGYRRTVA) the chain is on the cytoplasmic side. Residues 238 to 258 (ILYQVAFSVGLVALSGVAYAI) traverse the membrane as a helical segment. Topologically, residues 259-262 (PNWR) are extracellular. A helical membrane pass occupies residues 263–283 (WLQLTVSLPTFLCLFYYWCVP). A Proline-rich sequence motif is present at residues 283-287 (PESPR). At 284 to 347 (ESPRWLLSQK…FRTPNLRKHT (64 aa)) the chain is on the cytoplasmic side. Residue Ser-333 is modified to Phosphoserine. A helical transmembrane segment spans residues 348-368 (FILMFLWFTCSVLYQGLILHM). Residues 369-374 (GATGGN) are Extracellular-facing. The chain crosses the membrane as a helical span at residues 375-395 (VYLDFFYSSLVEFPAAFVILV). Residues 396-402 (TIDRVGR) lie on the Cytoplasmic side of the membrane. A helical membrane pass occupies residues 403-423 (IYPMAASNLAAGVASVILIFV). Over 424–431 (PQDLHWLT) the chain is Extracellular. The chain crosses the membrane as a helical span at residues 432-452 (IVLSCVGRMGATIVLQMICLV). Topologically, residues 453-464 (NAELYPTFVRNL) are cytoplasmic. The helical transmembrane segment at 465–485 (GVMVCSALCDVGGIITPFMVF) threads the bilayer. Topologically, residues 486–492 (RLMEVWQ) are extracellular. A helical transmembrane segment spans residues 493-513 (PLPLIVFGVLGLLAGGMTLLL). At 514–554 (PETKGVALPETIEDAENLRRKAKPKESKIYLQVQTSELKGP) the chain is on the cytoplasmic side.

The protein belongs to the major facilitator (TC 2.A.1) superfamily. Organic cation transporter (TC 2.A.1.19) family. Phosphorylated. Expressed in kidney, liver and intestine.

The protein resides in the basolateral cell membrane. Its subcellular location is the apical cell membrane. It is found in the lateral cell membrane. The protein localises to the basal cell membrane. The enzyme catalyses 1-methylnicotinamide(out) = 1-methylnicotinamide(in). It catalyses the reaction dopamine(out) = dopamine(in). It carries out the reaction serotonin(out) = serotonin(in). The catalysed reaction is (R)-adrenaline(out) = (R)-adrenaline(in). The enzyme catalyses (R)-noradrenaline(out) = (R)-noradrenaline(in). It catalyses the reaction histamine(out) = histamine(in). It carries out the reaction guanidine(out) = guanidine(in). The catalysed reaction is choline(out) = choline(in). The enzyme catalyses acetylcholine(in) = acetylcholine(out). It catalyses the reaction thiamine(in) = thiamine(out). It carries out the reaction spermidine(in) = spermidine(out). The catalysed reaction is agmatine(out) = agmatine(in). The enzyme catalyses putrescine(out) = putrescine(in). It catalyses the reaction (R)-carnitine(in) = (R)-carnitine(out). It carries out the reaction O-isobutanoyl-(R)-carnitine(in) = O-isobutanoyl-(R)-carnitine(out). The catalysed reaction is O-acetyl-(R)-carnitine(in) = O-acetyl-(R)-carnitine(out). The enzyme catalyses O-3-hydroxybutanoyl-(R)-carnitine(in) = O-3-hydroxybutanoyl-(R)-carnitine(out). It catalyses the reaction O-propanoyl-(R)-carnitine(in) = O-propanoyl-(R)-carnitine(out). It carries out the reaction O-butanoyl-(R)-carnitine(in) = O-butanoyl-(R)-carnitine(out). The catalysed reaction is O-2-methylbutanoyl-(R)-carnitine(in) = O-2-methylbutanoyl-(R)-carnitine(out). The enzyme catalyses O-3-methylbutanoyl-(R)-carnitine(in) = O-3-methylbutanoyl-(R)-carnitine(out). It catalyses the reaction O-hexanoyl-(R)-carnitine(in) = O-hexanoyl-(R)-carnitine(out). It carries out the reaction L-histidyl-L-proline diketopiperazine(in) = L-histidyl-L-proline diketopiperazine(out). The catalysed reaction is (R)-salsolinol(in) = (R)-salsolinol(out). The enzyme catalyses prostaglandin F2alpha(out) = prostaglandin F2alpha(in). It catalyses the reaction prostaglandin E2(out) = prostaglandin E2(in). Phosphorylation of the transporter leads to changes in its substrate affinity, resulting in a regulation of the transport activity. In contrast with rat ortholog, ASP uptake is inhibited by protein kinase A (PKA) and C (PKC) activation. ASP uptake is also endogenously activated by calmodulin, the calmodulin-dependent kinase II and LCK tyrosine kinase. Inhibited by cGMP, most likely through a cGMP-binding protein that interacts with OCT1. Electrogenic voltage-dependent transporter that mediates the transport of a variety of organic cations such as endogenous bioactive amines, cationic drugs and xenobiotics. Functions as a pH- and Na(+)-independent, bidirectional transporter. Cation cellular uptake or release is driven by the electrochemical potential (i.e. membrane potential and concentration gradient) and substrate selectivity. Hydrophobicity is a major requirement for recognition in polyvalent substrates and inhibitors. Primarily expressed in the basolateral membrane of hepatocytes and proximal tubules and involved in the uptake and disposition of cationic compounds from the blood by hepatic and renal clearance. Most likely functions as an uptake carrier in enterocytes contributing to the intestinal elimination of organic cations from the systemic circulation. Transports endogenous monoamines such as N-1-methylnicotinamide (NMN), guanidine, neurotransmitters dopamine, serotonin, noradrenaline, adrenaline and histamine, and quaternary ammonium compound such as choline. Also transports natural polyamines such as spermidine, agmatine and putrescine at low affinity, but relatively high turnover. Involved in the hepatic and intestinal uptake of the vitamin B1/thiamine, hence regulating hepatic lipid and energy metabolism. Contributes to the influx and efflux of fatty acid carriers carnitines and acylcarnitines across the basolateral membrane of hepatocytes, from the liver to the systemic circulation and inversely and may be involved in regulating the systemic availability of hepatic acylcarnitines. Also capable of transporting non-amine endogenous compounds such as prostaglandin E2 (PGE2) and prostaglandin F2-alpha (PGF2-alpha). May contribute to the transport of cationic compounds in testes across the blood-testis-barrier. Also mediates the uptake of xenobiotics tributylmethylammonium (TBuMA), quinidine, N-methyl-quinine (NMQ), N-methyl-quinidine (NMQD) N-(4,4-azo-n-pentyl)-quinuclidine (APQ), azidoprocainamide methoiodide (AMP), N-(4,4-azo-n-pentyl)-21-deoxyajmalinium (APDA) and 4-(4-(dimethylamino)styryl)-N-methylpyridinium (ASP). The sequence is that of Solute carrier family 22 member 1 (SLC22A1) from Oryctolagus cuniculus (Rabbit).